A 78-amino-acid polypeptide reads, in one-letter code: Large ribosomal subunit protein bL28 (78 aa).

This sequence belongs to the bacterial ribosomal protein bL28 family.

This Aromatoleum aromaticum (strain DSM 19018 / LMG 30748 / EbN1) (Azoarcus sp. (strain EbN1)) protein is Large ribosomal subunit protein bL28.